Consider the following 364-residue polypeptide: MAHRFPALTQEQKKELSEIAQSIVANGKGILAADESVGTMGNRLQRIKVENTEENRRQFREILFSVDSSINQSIGGVILFHETLYQKDSQGKLFRNILKEKGIVVGIKLDQGGAPLAGTNKETTIQGLDGLSERCAQYKKDGVDFGKWRAVLRIADQCPSSLAIQENANALARYASICQQNGLVPIVEPEVIPDGDHDLEHCQYVTEKVLAAAYKALNDHHVYLEGTLLKPNMVTAGHACTKKYTPEQVAMATVTALHRTVPAAVPGICFLSGGMSEEDATLNLNAINLCPLPKPWKLSFSYGRALQASALAAWGGKAANKEATQEAFMKRAVANHQAAKGQYVHTGSSGAASTQSLFTACYTY.

An N-acetylalanine modification is found at alanine 2. N6-succinyllysine is present on lysine 13. Serine 36 carries the post-translational modification Phosphoserine. Threonine 39 bears the Phosphothreonine mark. Beta-D-fructose 1,6-bisphosphate is bound at residue arginine 43. Serine 89 carries the phosphoserine modification. Threonine 119 is modified (phosphothreonine). An N6-succinyllysine modification is found at lysine 121. At serine 132 the chain carries Phosphoserine. Glutamate 188 (proton acceptor) is an active-site residue. Lysine 230 serves as the catalytic Schiff-base intermediate with dihydroxyacetone-P. A phosphoserine mark is found at serine 272, serine 276, serine 299, and serine 301. 272–274 (SGG) provides a ligand contact to beta-D-fructose 1,6-bisphosphate. A beta-D-fructose 1,6-bisphosphate-binding site is contributed by arginine 304. Serine 309 is modified (phosphoserine). Lysine 317 bears the N6-succinyllysine mark.

The protein belongs to the class I fructose-bisphosphate aldolase family. In terms of assembly, homotetramer. Interacts with BBS1, BBS2, BBS4 and BBS7. Forms a ternary complex with G6PD and TP53; this interaction is direct.

Its subcellular location is the cytoplasm. It is found in the cytosol. The protein localises to the cytoskeleton. The protein resides in the microtubule organizing center. It localises to the centrosome. Its subcellular location is the centriolar satellite. It catalyses the reaction beta-D-fructose 1,6-bisphosphate = D-glyceraldehyde 3-phosphate + dihydroxyacetone phosphate. The enzyme catalyses beta-D-fructose 1-phosphate = D-glyceraldehyde + dihydroxyacetone phosphate. It functions in the pathway carbohydrate degradation; glycolysis; D-glyceraldehyde 3-phosphate and glycerone phosphate from D-glucose: step 4/4. The protein operates within carbohydrate biosynthesis; gluconeogenesis. It participates in carbohydrate metabolism; fructose metabolism. Catalyzes the aldol cleavage of fructose 1,6-biphosphate to form two triosephosphates dihydroxyacetone phosphate and D-glyceraldehyde 3-phosphate in glycolysis as well as the reverse stereospecific aldol addition reaction in gluconeogenesis. In fructolysis, metabolizes fructose 1-phosphate derived from the phosphorylation of dietary fructose by fructokinase into dihydroxyacetone phosphate and D-glyceraldehyde. Acts as an adapter independently of its enzymatic activity, exerts a tumor suppressor role by stabilizing the ternary complex with G6PD and TP53 to inhibit G6PD activity and keep oxidative pentose phosphate metabolism in check. The polypeptide is Fructose-bisphosphate aldolase B (ALDOB) (Pongo abelii (Sumatran orangutan)).